Here is a 305-residue protein sequence, read N- to C-terminus: Uridylate-specific endoribonuclease D (305 aa).

The signal sequence occupies residues 1 to 17 (MKVYFVFLCLLPSLISG). The EndoU domain maps to 33 to 305 (SNAEIQSLAE…RYVASSYPNI (273 aa)). Active-site residues include histidine 182, histidine 197, and lysine 240. Asparagine 288 is a glycosylation site (N-linked (GlcNAc...) asparagine).

This sequence belongs to the ENDOU family. Monomer. Mn(2+) serves as cofactor.

The protein resides in the secreted. It carries out the reaction ribonucleotidyl-uridine-RNA = a 5'-end dephospho-uridine-RNA + a 3'-end 2',3'-cyclophospho-ribonucleotide-RNA. In terms of biological role, endoribonuclease that cleaves single-stranded RNAs at 5' of uridylates and releases a product with a 2',3'-cyclic phosphate at the 3'-end. In Xenopus laevis (African clawed frog), this protein is Uridylate-specific endoribonuclease D (endou-d).